We begin with the raw amino-acid sequence, 217 residues long: Putative threonylcarbamoyl-AMP synthase (217 aa).

Positions 14 to 199 (SRGIVSAVGA…TPRVLRPGPV (186 aa)) constitute a YrdC-like domain.

It belongs to the SUA5 family.

The protein localises to the cytoplasm. The enzyme catalyses L-threonine + hydrogencarbonate + ATP = L-threonylcarbamoyladenylate + diphosphate + H2O. In terms of biological role, required for the formation of a threonylcarbamoyl group on adenosine at position 37 (t(6)A37) in tRNAs that read codons beginning with adenine. Catalyzes the conversion of L-threonine, HCO(3)(-)/CO(2) and ATP to give threonylcarbamoyl-AMP (TC-AMP) as the acyladenylate intermediate, with the release of diphosphate. The polypeptide is Putative threonylcarbamoyl-AMP synthase (Mycobacterium tuberculosis (strain CDC 1551 / Oshkosh)).